Here is a 78-residue protein sequence, read N- to C-terminus: Large ribosomal subunit protein bL28 (78 aa).

The protein belongs to the bacterial ribosomal protein bL28 family.

This is Large ribosomal subunit protein bL28 from Thioalkalivibrio sulfidiphilus (strain HL-EbGR7).